We begin with the raw amino-acid sequence, 55 residues long: Cop-6 protein (55 aa).

Belongs to the transcriptional regulatory CopG/NikR family.

Functionally, acts in trans as a negative regulatory element in pE194 replication. The sequence is that of Cop-6 protein from Staphylococcus aureus.